The chain runs to 112 residues: C-type natriuretic peptide 3 (112 aa).

Positions Met1–Ala19 are cleaved as a signal peptide. Positions Arg20–Lys90 are excised as a propeptide. The segment at Gln33–Glu67 is disordered. Residues Glu40 to Pro54 show a composition bias toward basic and acidic residues. Cys96 and Cys112 are joined by a disulfide.

It belongs to the natriuretic peptide family. In terms of tissue distribution, spinal cord, kidney, ovary, heart and spleen, and to a lower extent in brain and liver.

It is found in the secreted. Exhibits natriuretic and vasodepressant activity. Has cGMP-stimulating activity. May help to regulate body fluid homeostasis in a variety of aquatic environments. This chain is C-type natriuretic peptide 3, found in Oryzias latipes (Japanese rice fish).